The following is a 653-amino-acid chain: Pentatricopeptide repeat-containing protein At3g14730 (653 aa).

PPR repeat units follow at residues 59 to 93 (NVAT…GFLD), 95 to 119 (SPRA…VLVF), 125 to 159 (DVFG…GILP), 160 to 193 (DKYT…GFDS), 194 to 224 (DCYV…LPDR), 226 to 260 (DSVL…GVGV), 261 to 295 (SRHT…GSGS), 296 to 326 (DIVV…MDER), 327 to 361 (DLFT…GIRP), 362 to 396 (DIVT…GLLN), 401 to 431 (NEFI…MRVK), 432 to 466 (DSAS…GVKP), 467 to 497 (DEIT…METV), and 503 to 537 (TSDH…DNPV). A type E motif region spans residues 538 to 613 (VWRSILSSCR…TPGCSWIVLK (76 aa)). The interval 614–644 (NGVHTFFTGNQTHPEFKSIHDWLSLVISHMH) is type E(+) motif.

It belongs to the PPR family. PCMP-E subfamily.

This Arabidopsis thaliana (Mouse-ear cress) protein is Pentatricopeptide repeat-containing protein At3g14730 (PCMP-E31).